Here is a 460-residue protein sequence, read N- to C-terminus: Cysteine--tRNA ligase (460 aa).

Cys-28 provides a ligand contact to Zn(2+). A 'HIGH' region motif is present at residues 30 to 40 (MTVYDYCHLGH). Residues Cys-209, His-234, and Glu-238 each coordinate Zn(2+). The 'KMSKS' region signature appears at 266–270 (KMSKS). Lys-269 serves as a coordination point for ATP.

Belongs to the class-I aminoacyl-tRNA synthetase family. In terms of assembly, monomer. Zn(2+) is required as a cofactor.

The protein resides in the cytoplasm. The enzyme catalyses tRNA(Cys) + L-cysteine + ATP = L-cysteinyl-tRNA(Cys) + AMP + diphosphate. The chain is Cysteine--tRNA ligase from Pseudomonas paraeruginosa (strain DSM 24068 / PA7) (Pseudomonas aeruginosa (strain PA7)).